Reading from the N-terminus, the 318-residue chain is MYFVNLLTTIIPILLAVAFLTLLERKFLGYMQLRKGPNIVGPYGLLQPITDAVKLFIKEPLQPLTSSLILFIIAPTLALTLALMMWIPLPMPHPLVNMNLSILFMLALSSLAVYAILWSGWASNSKYALIGALRAVAQTISYEVTLAIIILSVLLMNGSFTLSTLITTQEHIWLLLPSWPLAMMWFISTLAETNRAPFDLTEGESELVSGFNVEYAGGPFALFFLAEYANIIMMNALTTILFLGAHNNSLFPEMYTTNFMLKTLLFTTFFLWIRASYPRFRYDQLMHLLWKNFLPLTLVMCMWHITLPIILASIPPQT.

The next 8 membrane-spanning stretches (helical) occupy residues Phe3–Leu23, Leu68–Pro88, Ile102–Ala122, Leu146–Ile166, His171–Ala191, Leu222–Phe242, Glu253–Ile273, and Leu294–Ile314.

The protein belongs to the complex I subunit 1 family.

The protein localises to the mitochondrion inner membrane. It carries out the reaction a ubiquinone + NADH + 5 H(+)(in) = a ubiquinol + NAD(+) + 4 H(+)(out). Functionally, core subunit of the mitochondrial membrane respiratory chain NADH dehydrogenase (Complex I) that is believed to belong to the minimal assembly required for catalysis. Complex I functions in the transfer of electrons from NADH to the respiratory chain. The immediate electron acceptor for the enzyme is believed to be ubiquinone. The chain is NADH-ubiquinone oxidoreductase chain 1 (MT-ND1) from Nyctalus plancyi velutinus (Fine-haired noctule).